The sequence spans 107 residues: UPF0473 protein LACR_0139 (107 aa).

The protein belongs to the UPF0473 family.

In Lactococcus lactis subsp. cremoris (strain SK11), this protein is UPF0473 protein LACR_0139.